A 596-amino-acid chain; its full sequence is Elongation factor 4 (596 aa).

Residues 2–184 (KHIRNFSIIA…VIVAKIPPPE (183 aa)) enclose the tr-type G domain. GTP contacts are provided by residues 14–19 (DHGKST) and 131–134 (NKID).

This sequence belongs to the TRAFAC class translation factor GTPase superfamily. Classic translation factor GTPase family. LepA subfamily.

The protein localises to the cell inner membrane. It carries out the reaction GTP + H2O = GDP + phosphate + H(+). Functionally, required for accurate and efficient protein synthesis under certain stress conditions. May act as a fidelity factor of the translation reaction, by catalyzing a one-codon backward translocation of tRNAs on improperly translocated ribosomes. Back-translocation proceeds from a post-translocation (POST) complex to a pre-translocation (PRE) complex, thus giving elongation factor G a second chance to translocate the tRNAs correctly. Binds to ribosomes in a GTP-dependent manner. This Shewanella sp. (strain W3-18-1) protein is Elongation factor 4.